Reading from the N-terminus, the 454-residue chain is Nuclear envelope integral membrane protein (454 aa).

Residues 1–18 (MHSAGLLMLTVAGYFTSG) form the signal peptide. Residue Asn38 is glycosylated (N-linked (GlcNAc...) asparagine). 5 helical membrane-spanning segments follow: residues 138–158 (IPLD…LFSA), 166–186 (VFYY…VVIY), 197–217 (MMYG…KQLA), 231–251 (VLGY…RIGP), and 280–300 (TSAV…PISW). The segment covering 388–405 (SMDAAPEEESVEEPEEDK) has biased composition (acidic residues). Residues 388–454 (SMDAAPEEES…QEVDLRQVVQ (67 aa)) are disordered. A compositionally biased stretch (polar residues) spans 414–424 (NSQFRYQQAAR). Positions 428 to 446 (PEPESESDDSEEEEFFEQE) are enriched in acidic residues.

The protein belongs to the NEMP family. In terms of assembly, interacts with OTE. As to expression, expressed in both germline and somatic cells in the larval testis and prepupal ovary (at protein level). Also detected in the larval eye and larval wing disk (at protein level).

Its subcellular location is the nucleus inner membrane. In terms of biological role, contributes to nuclear envelope stiffness in germ cells. Required for male and female fertility. This chain is Nuclear envelope integral membrane protein, found in Drosophila melanogaster (Fruit fly).